Here is a 335-residue protein sequence, read N- to C-terminus: DNA-directed RNA polymerase subunit alpha (335 aa).

The segment at 1-233 (MMLNATEFLT…QQISIFVDLE (233 aa)) is alpha N-terminal domain (alpha-NTD). Positions 247-335 (VDPVLLRPVD…VDDRFSYRSR (89 aa)) are alpha C-terminal domain (alpha-CTD).

Belongs to the RNA polymerase alpha chain family. In terms of assembly, homodimer. The RNAP catalytic core consists of 2 alpha, 1 beta, 1 beta' and 1 omega subunit. When a sigma factor is associated with the core the holoenzyme is formed, which can initiate transcription.

The catalysed reaction is RNA(n) + a ribonucleoside 5'-triphosphate = RNA(n+1) + diphosphate. In terms of biological role, DNA-dependent RNA polymerase catalyzes the transcription of DNA into RNA using the four ribonucleoside triphosphates as substrates. This is DNA-directed RNA polymerase subunit alpha from Psychrobacter arcticus (strain DSM 17307 / VKM B-2377 / 273-4).